A 218-amino-acid polypeptide reads, in one-letter code: Glutathione S-transferase Mu 3 (218 aa).

The region spanning 2-88 (PMTLGYWNTR…YLGRKHNLCG (87 aa)) is the GST N-terminal domain. Glutathione contacts are provided by residues 7-8 (YW), 46-50 (WLSEK), and 59-60 (NL). Lysine 50 is covalently cross-linked (Glycyl lysine isopeptide (Lys-Gly) (interchain with G-Cter in SUMO2)). A Glycyl lysine isopeptide (Lys-Gly) (interchain with G-Cter in SUMO2) cross-link involves residue lysine 69. 72–73 (QS) lines the glutathione pocket. The region spanning 90-208 (TEEERIRVDT…KSSRFLPRPV (119 aa)) is the GST C-terminal domain.

It belongs to the GST superfamily. Mu family. As to quaternary structure, homodimer.

It localises to the cytoplasm. It catalyses the reaction RX + glutathione = an S-substituted glutathione + a halide anion + H(+). Conjugation of reduced glutathione to a wide number of exogenous and endogenous hydrophobic electrophiles. This Mus musculus (Mouse) protein is Glutathione S-transferase Mu 3 (Gstm3).